A 131-amino-acid polypeptide reads, in one-letter code: uncharacterized protein (131 aa).

A run of 2 helical transmembrane segments spans residues 68 to 88 (VVRATPIIGPYAGLPVIVAPI) and 94 to 114 (VLGAIGVVDITAGIFEDIVAI).

The protein resides in the cell membrane. This is an uncharacterized protein from Methanocaldococcus jannaschii (strain ATCC 43067 / DSM 2661 / JAL-1 / JCM 10045 / NBRC 100440) (Methanococcus jannaschii).